Consider the following 114-residue polypeptide: Superoxide dismutase [Cu-Zn] (114 aa).

Positions 37, 39, and 54 each coordinate Cu cation. Residues 49–73 (MSSGPHYNPRNKEHGAPTDENRHLG) are disordered. Positions 54, 62, 71, and 74 each coordinate Zn(2+). Residues 58 to 73 (RNKEHGAPTDENRHLG) are compositionally biased toward basic and acidic residues. His111 is a binding site for Cu cation.

It belongs to the Cu-Zn superoxide dismutase family. Homodimer. The cofactor is Cu cation. Requires Zn(2+) as cofactor.

The protein localises to the cytoplasm. It carries out the reaction 2 superoxide + 2 H(+) = H2O2 + O2. Its function is as follows. Destroys radicals which are normally produced within the cells and which are toxic to biological systems. This Drosophila madeirensis (Fruit fly) protein is Superoxide dismutase [Cu-Zn].